Reading from the N-terminus, the 502-residue chain is Glycerol kinase (502 aa).

Thr14 is a binding site for ADP. Positions 14, 15, and 16 each coordinate ATP. Thr14 is a sn-glycerol 3-phosphate binding site. Arg18 serves as a coordination point for ADP. 4 residues coordinate sn-glycerol 3-phosphate: Arg84, Glu85, Tyr136, and Asp246. The glycerol site is built by Arg84, Glu85, Tyr136, Asp246, and Gln247. Thr268 and Gly311 together coordinate ADP. 4 residues coordinate ATP: Thr268, Gly311, Gln315, and Gly412. Positions 412 and 416 each coordinate ADP.

Belongs to the FGGY kinase family. In terms of assembly, homotetramer and homodimer (in equilibrium). Heterodimer with EIIA-Glc. Binds 1 zinc ion per glycerol kinase EIIA-Glc dimer. The zinc ion is important for dimerization.

The catalysed reaction is glycerol + ATP = sn-glycerol 3-phosphate + ADP + H(+). It participates in polyol metabolism; glycerol degradation via glycerol kinase pathway; sn-glycerol 3-phosphate from glycerol: step 1/1. With respect to regulation, activity of this regulatory enzyme is affected by several metabolites. Allosterically and non-competitively inhibited by fructose 1,6-bisphosphate (FBP) and unphosphorylated phosphocarrier protein EIIA-Glc (III-Glc), an integral component of the bacterial phosphotransferase (PTS) system. Its function is as follows. Key enzyme in the regulation of glycerol uptake and metabolism. Catalyzes the phosphorylation of glycerol to yield sn-glycerol 3-phosphate. This Shigella boydii serotype 18 (strain CDC 3083-94 / BS512) protein is Glycerol kinase.